The sequence spans 348 residues: Alpha-2-HS-glycoprotein (348 aa).

A signal peptide spans 1-18; it reads MKTLVLLLCFTLLWGCQS. Residues 19–133 enclose the Cystatin fetuin-A-type 1 domain; sequence APQGTGLGFR…QFSVMHTKCH (115 aa). Intrachain disulfides connect Cys-32-Cys-339, Cys-89-Cys-100, Cys-114-Cys-132, Cys-146-Cys-149, Cys-208-Cys-219, and Cys-230-Cys-247. N-linked (GlcNAc...) asparagine glycosylation occurs at Asn-99. Residues Ser-134 and Ser-138 each carry the phosphoserine modification. Positions 144 to 255 constitute a Cystatin fetuin-A-type 2 domain; sequence KVCPHCALLT…TCTAFPTQAN (112 aa). Residues Asn-156 and Asn-176 are each glycosylated (N-linked (GlcNAc...) asparagine). Phosphoserine occurs at positions 307, 311, 314, and 316.

Belongs to the fetuin family. Post-translationally, phosphorylated by FAM20C in the extracellular medium. As to expression, expressed by the liver and secreted in plasma.

It localises to the secreted. The chain is Alpha-2-HS-glycoprotein (AHSG) from Meriones unguiculatus (Mongolian jird).